Reading from the N-terminus, the 148-residue chain is Dermatopontin (148 aa).

An intrachain disulfide couples Cys-14 to Cys-40. A glycan (N-linked (GlcNAc...) asparagine) is linked at Asn-44. Disulfide bonds link Cys-66–Cys-93 and Cys-103–Cys-147.

It belongs to the dermatopontin family. Post-translationally, the terminal mannose residues of the polysaccharide are 3-O-methylated. No tyrosine sulfation was detected.

It localises to the secreted. Its subcellular location is the extracellular space. The protein localises to the extracellular matrix. In terms of biological role, seems to mediate adhesion by cell surface integrin binding. In Biomphalaria glabrata (Bloodfluke planorb), this protein is Dermatopontin.